We begin with the raw amino-acid sequence, 427 residues long: Histidine--tRNA ligase (427 aa).

The protein belongs to the class-II aminoacyl-tRNA synthetase family. Homodimer.

It is found in the cytoplasm. It carries out the reaction tRNA(His) + L-histidine + ATP = L-histidyl-tRNA(His) + AMP + diphosphate + H(+). This is Histidine--tRNA ligase from Mannheimia succiniciproducens (strain KCTC 0769BP / MBEL55E).